A 354-amino-acid chain; its full sequence is UDP-N-acetylglucosamine--N-acetylmuramyl-(pentapeptide) pyrophosphoryl-undecaprenol N-acetylglucosamine transferase (354 aa).

Residues 15–17 (TGG), asparagine 127, arginine 163, serine 191, isoleucine 242, 261–266 (ALTVSE), and glutamine 286 contribute to the UDP-N-acetyl-alpha-D-glucosamine site.

It belongs to the glycosyltransferase 28 family. MurG subfamily.

The protein localises to the cell inner membrane. It carries out the reaction di-trans,octa-cis-undecaprenyl diphospho-N-acetyl-alpha-D-muramoyl-L-alanyl-D-glutamyl-meso-2,6-diaminopimeloyl-D-alanyl-D-alanine + UDP-N-acetyl-alpha-D-glucosamine = di-trans,octa-cis-undecaprenyl diphospho-[N-acetyl-alpha-D-glucosaminyl-(1-&gt;4)]-N-acetyl-alpha-D-muramoyl-L-alanyl-D-glutamyl-meso-2,6-diaminopimeloyl-D-alanyl-D-alanine + UDP + H(+). The protein operates within cell wall biogenesis; peptidoglycan biosynthesis. Cell wall formation. Catalyzes the transfer of a GlcNAc subunit on undecaprenyl-pyrophosphoryl-MurNAc-pentapeptide (lipid intermediate I) to form undecaprenyl-pyrophosphoryl-MurNAc-(pentapeptide)GlcNAc (lipid intermediate II). The chain is UDP-N-acetylglucosamine--N-acetylmuramyl-(pentapeptide) pyrophosphoryl-undecaprenol N-acetylglucosamine transferase from Pasteurella multocida (strain Pm70).